The sequence spans 323 residues: Methionyl-tRNA formyltransferase (323 aa).

Ser118–Pro121 provides a ligand contact to (6S)-5,6,7,8-tetrahydrofolate.

It belongs to the Fmt family.

The enzyme catalyses L-methionyl-tRNA(fMet) + (6R)-10-formyltetrahydrofolate = N-formyl-L-methionyl-tRNA(fMet) + (6S)-5,6,7,8-tetrahydrofolate + H(+). Attaches a formyl group to the free amino group of methionyl-tRNA(fMet). The formyl group appears to play a dual role in the initiator identity of N-formylmethionyl-tRNA by promoting its recognition by IF2 and preventing the misappropriation of this tRNA by the elongation apparatus. In Buchnera aphidicola subsp. Baizongia pistaciae (strain Bp), this protein is Methionyl-tRNA formyltransferase.